The chain runs to 413 residues: Monacolin J acid methylbutanoyltransferase (413 aa).

Residue Arg73 participates in monacolin J binding. Ser76 (acyl-ester intermediate) is an active-site residue. Residues Arg173, Tyr188, and Tyr258 each coordinate monacolin J. Residue Gly366 coordinates 2-methylbutanoate. Monacolin J-binding residues include Glu388 and Trp390.

It belongs to the class-A beta-lactamase family. Interacts with LovF.

It carries out the reaction monacolin J carboxylate + (S)-2-methylbutanoyl-[2-methylbutanoate polyketide synthase] = lovastatin carboxylate + holo-[2-methylbutanoate polyketide synthase]. It functions in the pathway polyketide biosynthesis; lovastatin biosynthesis. Monacolin J acid methylbutanoyltransferase; part of the gene cluster that mediates the biosynthesis of lovastatin (also known as mevinolin, mevacor or monacolin K), a hypolipidemic inhibitor of (3S)-hydroxymethylglutaryl-coenzyme A (HMG-CoA) reductase (HMGR). The first step in the biosynthesis of lovastatin is the production of dihydromonacolin L acid by the lovastatin nonaketide synthase lovB and the trans-acting enoyl reductase lovC via condensation of one acetyl-CoA unit and 8 malonyl-CoA units. Dihydromonacolin L acid is released from lovB by the thioesterase lovG. Next, dihydromonacolin L acid is oxidized by the dihydromonacolin L monooxygenase lovA twice to form monacolin J acid. The 2-methylbutyrate moiety of lovastatin is synthesized by the lovastatin diketide synthase lovF via condensation of one acetyl-CoA unit and one malonyl-CoA unit. Finally, the covalent attachment of this moiety to monacolin J acid is catalyzed by the transesterase lovD to yield lovastatin. LovD has broad substrate specificity and can also convert monacolin J to simvastatin using alpha-dimethylbutanoyl-S-methyl-3-mercaptopropionate (DMB-S-MMP) as the thioester acyl donor, and can also catalyze the reverse reaction and function as hydrolase in vitro. LovD has much higher activity with LovF-bound 2-methylbutanoate than with free diketide substrates. The sequence is that of Monacolin J acid methylbutanoyltransferase from Aspergillus terreus.